The sequence spans 102 residues: MVRYRMRSLSERSHEVHGQQVHGQDQGHNGQEEQGLNPEHVEVYERTHGHSHYRRRHCSRRRLHRIHRRRHRSCRRRRRRSCRHRRRHRRGCRTRRRRCRRH.

The segment at 1–102 (MVRYRMRSLS…RTRRRRCRRH (102 aa)) is disordered. A phosphoserine mark is found at Ser8 and Ser10. A compositionally biased stretch (basic and acidic residues) spans 8-17 (SLSERSHEVH). Residues 18 to 29 (GQQVHGQDQGHN) show a composition bias toward low complexity. The span at 39-48 (EHVEVYERTH) shows a compositional bias: basic and acidic residues. Residues 49-102 (GHSHYRRRHCSRRRLHRIHRRRHRSCRRRRRRSCRHRRRHRRGCRTRRRRCRRH) show a composition bias toward basic residues.

The protein belongs to the protamine P2 family. As to quaternary structure, interacts with TDRP. Proteolytic processing into mature chains is required for histone eviction during spermatogenesis. Transition proteins (TNP1 and TNP2) are required for processing. As to expression, testis.

Its subcellular location is the nucleus. It localises to the chromosome. Functionally, protamines substitute for histones in the chromatin of sperm during the haploid phase of spermatogenesis. They compact sperm DNA into a highly condensed, stable and inactive complex. The sequence is that of Protamine-2 (PRM2) from Macaca mulatta (Rhesus macaque).